We begin with the raw amino-acid sequence, 241 residues long: tRNA pseudouridine synthase A (241 aa).

Residue Asp-51 is the Nucleophile of the active site. Tyr-110 contacts substrate.

It belongs to the tRNA pseudouridine synthase TruA family. In terms of assembly, homodimer.

It carries out the reaction uridine(38/39/40) in tRNA = pseudouridine(38/39/40) in tRNA. Functionally, formation of pseudouridine at positions 38, 39 and 40 in the anticodon stem and loop of transfer RNAs. The polypeptide is tRNA pseudouridine synthase A (Campylobacter jejuni subsp. jejuni serotype O:23/36 (strain 81-176)).